Reading from the N-terminus, the 334-residue chain is Protein-methionine-sulfoxide reductase catalytic subunit MsrP (334 aa).

The tat-type signal signal peptide spans 1 to 44 (MKKNQFLKESDVTAESVFFMKRRQVLKALGISAAAFSLPHAAHA). Mo-molybdopterin contacts are provided by residues N88, 91–92 (YE), C146, T181, N233, R238, and 249–251 (GIK).

Belongs to the MsrP family. Heterodimer of a catalytic subunit (MsrP) and a heme-binding subunit (MsrQ). It depends on Mo-molybdopterin as a cofactor. In terms of processing, predicted to be exported by the Tat system. The position of the signal peptide cleavage has not been experimentally proven.

The protein resides in the periplasm. It catalyses the reaction L-methionyl-[protein] + a quinone + H2O = L-methionyl-(S)-S-oxide-[protein] + a quinol. The catalysed reaction is L-methionyl-[protein] + a quinone + H2O = L-methionyl-(R)-S-oxide-[protein] + a quinol. Functionally, part of the MsrPQ system that repairs oxidized periplasmic proteins containing methionine sulfoxide residues (Met-O), using respiratory chain electrons. Thus protects these proteins from oxidative-stress damage caused by reactive species of oxygen and chlorine generated by the host defense mechanisms. MsrPQ is essential for the maintenance of envelope integrity under bleach stress, rescuing a wide series of structurally unrelated periplasmic proteins from methionine oxidation, including the primary periplasmic chaperone SurA and the lipoprotein Pal. The catalytic subunit MsrP is non-stereospecific, being able to reduce both (R-) and (S-) diastereoisomers of methionine sulfoxide. This is Protein-methionine-sulfoxide reductase catalytic subunit MsrP from Escherichia coli O7:K1 (strain IAI39 / ExPEC).